The sequence spans 347 residues: Phenylalanine--tRNA ligase alpha subunit (347 aa).

Glu-262 lines the Mg(2+) pocket.

It belongs to the class-II aminoacyl-tRNA synthetase family. Phe-tRNA synthetase alpha subunit type 1 subfamily. In terms of assembly, tetramer of two alpha and two beta subunits. Mg(2+) serves as cofactor.

Its subcellular location is the cytoplasm. The enzyme catalyses tRNA(Phe) + L-phenylalanine + ATP = L-phenylalanyl-tRNA(Phe) + AMP + diphosphate + H(+). This Roseiflexus sp. (strain RS-1) protein is Phenylalanine--tRNA ligase alpha subunit.